Reading from the N-terminus, the 1100-residue chain is Sorbin and SH3 domain-containing protein 2 (1100 aa).

Phosphoserine occurs at positions 13, 14, 27, 28, 30, and 43. The segment covering 30-52 (SLDSTDTYPQHAQSLDGTTSSSI) has biased composition (polar residues). The interval 30–57 (SLDSTDTYPQHAQSLDGTTSSSIPLYRS) is disordered. Positions 66–127 (VIKAPHYPGI…YNTPYTYNAG (62 aa)) constitute a SoHo domain. Residues 134 to 147 (SAQSHPAAKTQTYR) are compositionally biased toward polar residues. The disordered stretch occupies residues 134-311 (SAQSHPAAKT…SPSRAKGGDD (178 aa)). Position 153 is an alanine amide (His-153). Phosphoserine is present on residues Ser-154 and Ser-157. Positions 167 to 180 (PVPPPHVPPPVPPL) are enriched in pro residues. Basic and acidic residues predominate over residues 181–217 (RPRDRSSTEKHDWDPPDRKVDTRKFRSEPRSIFEYEP). Ser-234 and Ile-236 each carry phosphothreonine. A phosphoserine mark is found at Ser-239, Ser-245, Ser-248, Lys-258, Ser-259, and Glu-260. A phosphothreonine mark is found at Thr-277, Gly-280, and Val-282. Ser-287 bears the Phosphoserine mark. Positions 287–304 (SSTTLTKSFTSSSPSSPS) are enriched in low complexity. The residue at position 292 (Thr-292) is a Phosphothreonine. 10 positions are modified to phosphoserine: Phe-295, Ser-297, Ser-298, Ser-299, Ser-301, Ser-302, Ser-304, Ala-306, Asp-311, and Pro-316. Ser-320, Ser-322, and Gly-326 each carry phosphothreonine. His-341, Val-344, and Arg-346 each carry phosphoserine. Residue Glu-366 is modified to Phosphothreonine. A phosphoserine mark is found at Ser-381 and Ser-383. Asp-413 and Lys-415 each carry phosphothreonine. 2 positions are modified to phosphoserine: Arg-437 and Arg-439. At Ile-459 the chain carries Phosphothreonine. Residues Lys-474, Ser-494, Ser-497, Ser-550, and Ser-750 each carry the phosphoserine modification. A disordered region spans residues 807 to 866 (RMPRSASFQDVDTANSSCHHQDRGGALQDRESPRSYSSTLTDMGRSAPRERRGTPEKEKL). Over residues 812 to 824 (ASFQDVDTANSSC) the composition is skewed to polar residues. Residues 825 to 839 (HHQDRGGALQDRESP) are compositionally biased toward basic and acidic residues. Ser-843 carries the phosphoserine modification. The span at 853–866 (APRERRGTPEKEKL) shows a compositional bias: basic and acidic residues. SH3 domains are found at residues 863 to 922 (KEKL…KLTP) and 938 to 999 (GEIG…VVKK). Phosphoserine occurs at positions 1017 and 1023. Positions 1041 to 1100 (GGGEPFQALYNYTPRNEDELELRESDVIDVMEKCDDGWFVGTSRRTKFFGTFPGNYVKRL) constitute an SH3 3 domain.

As to quaternary structure, interacts with ABL, CBL, DNM1, DNM2, FLOT1, AFDN, PTK2B/PYK2, SAPAP, SPTAN1, SYNJ1, SYNJ2, VCL/vinculin and WASF. Interacts with ABL1/c-Abl, ABL2/v-Abl/Arg, ACTN, CBL and PALLD. Interacts with PTPN12 and WASF1 via its SH3 domains; this interaction may mediate the partial PTPN12 and WASF1 translocation to focal adhesion sites. Post-translationally, ubiquitinated by CBL. In terms of processing, dephosphorylated by PTPN12. Abundantly expressed in heart. In cardiac muscle cells, located in the Z-disks of sarcomere. Also found, but to a lower extent, in small and large intestine, pancreas, thymus, colon, spleen, prostate, testis, brain, ovary and epithelial cells. In the pancreas, mainly expressed in acinar cells, duct cells and all cell types in islets (at protein level). Tends to be down-regulated in pancreatic adenocarcinomas ans metastases.

The protein resides in the cytoplasm. The protein localises to the perinuclear region. Its subcellular location is the apical cell membrane. It is found in the cell junction. It localises to the focal adhesion. The protein resides in the cell projection. The protein localises to the lamellipodium. Functionally, adapter protein that plays a role in the assembling of signaling complexes, being a link between ABL kinases and actin cytoskeleton. Can form complex with ABL1 and CBL, thus promoting ubiquitination and degradation of ABL1. May play a role in the regulation of pancreatic cell adhesion, possibly by acting on WASF1 phosphorylation, enhancing phosphorylation by ABL1, as well as dephosphorylation by PTPN12. Isoform 6 increases water and sodium absorption in the intestine and gall-bladder. The sequence is that of Sorbin and SH3 domain-containing protein 2 (SORBS2) from Homo sapiens (Human).